Here is a 62-residue protein sequence, read N- to C-terminus: Conotoxin Pn-B0151 (62 aa).

Residues 1–22 (MRCLPVFVILLLLIASTPSVDA) form the signal peptide. A propeptide spanning residues 23-48 (LQKTKDDMPLASFHDNVKRILQTLSN) is cleaved from the precursor.

It belongs to the conotoxin T superfamily. Post-translationally, contains 2 disulfide bonds that can be either 'C1-C3, C2-C4' or 'C1-C4, C2-C3', since these disulfide connectivities have been observed for conotoxins with cysteine framework V (for examples, see AC P0DQQ7 and AC P81755). Expressed by the venom duct.

The protein resides in the secreted. This Conus pennaceus (Feathered cone) protein is Conotoxin Pn-B0151.